The sequence spans 193 residues: Major structural subunit of bundle-forming pilus (193 aa).

A propeptide spans Met1–Gly13 (leader sequence). An N-methylleucine modification is found at Leu14. A helical transmembrane segment spans residues Leu14–Phe35. A disulfide bond links Cys129 and Cys179.

Belongs to the N-Me-Phe pilin family. As to quaternary structure, 10 to 100 laterally aligned filaments or bundle-forming pili coalesce into rope-like bundles. These form linkages between the bacteria within the enteropathogenic E.coli (EPEC) microcolonies that are attached to epithelial cells.

The protein localises to the fimbrium. It is found in the membrane. In terms of biological role, major component of type IV bundle-forming pili (BFP) that plays a role in adherence to host cells and virulence. This Escherichia coli O127:H6 (strain E2348/69 / EPEC) protein is Major structural subunit of bundle-forming pilus (bfpA).